The primary structure comprises 429 residues: Adenylosuccinate synthetase (429 aa).

GTP-binding positions include 12–18 (GDEGKGK) and 40–42 (GHT). The active-site Proton acceptor is Asp-13. Mg(2+) contacts are provided by Asp-13 and Gly-40. IMP-binding positions include 13–16 (DEGK), 38–41 (NAGH), Thr-128, Arg-142, Gln-223, Thr-238, and Arg-302. The active-site Proton donor is His-41. Position 298 to 304 (298 to 304 (TVTGRPR)) interacts with substrate. Residues Arg-304, 330-332 (LLD), and 412-414 (SVG) each bind GTP.

This sequence belongs to the adenylosuccinate synthetase family. In terms of assembly, homodimer. Mg(2+) serves as cofactor.

The protein localises to the cytoplasm. It carries out the reaction IMP + L-aspartate + GTP = N(6)-(1,2-dicarboxyethyl)-AMP + GDP + phosphate + 2 H(+). It participates in purine metabolism; AMP biosynthesis via de novo pathway; AMP from IMP: step 1/2. Its function is as follows. Plays an important role in the de novo pathway of purine nucleotide biosynthesis. Catalyzes the first committed step in the biosynthesis of AMP from IMP. The protein is Adenylosuccinate synthetase of Lactobacillus acidophilus (strain ATCC 700396 / NCK56 / N2 / NCFM).